Reading from the N-terminus, the 407-residue chain is Methylthioribose-1-phosphate isomerase (407 aa).

D275 functions as the Proton donor in the catalytic mechanism.

Belongs to the eIF-2B alpha/beta/delta subunits family. MtnA subfamily.

Its subcellular location is the cytoplasm. The protein localises to the nucleus. It carries out the reaction 5-(methylsulfanyl)-alpha-D-ribose 1-phosphate = 5-(methylsulfanyl)-D-ribulose 1-phosphate. It participates in amino-acid biosynthesis; L-methionine biosynthesis via salvage pathway; L-methionine from S-methyl-5-thio-alpha-D-ribose 1-phosphate: step 1/6. Its function is as follows. Catalyzes the interconversion of methylthioribose-1-phosphate (MTR-1-P) into methylthioribulose-1-phosphate (MTRu-1-P). The chain is Methylthioribose-1-phosphate isomerase from Kluyveromyces lactis (strain ATCC 8585 / CBS 2359 / DSM 70799 / NBRC 1267 / NRRL Y-1140 / WM37) (Yeast).